The chain runs to 600 residues: NAD-dependent malic enzyme, mitochondrial (600 aa).

A mitochondrion-targeting transit peptide spans 1 to 68 (MTRTPFTLSL…NMPIAAPVRT (68 aa)). Arginine 93 provides a ligand contact to fumarate. Tyrosine 138 (proton donor) is an active-site residue. Arginine 194 is a binding site for (S)-malate. Arginine 194 is an NAD(+) binding site. Catalysis depends on lysine 212, which acts as the Proton acceptor. Residues glutamate 283, aspartate 284, and aspartate 307 each coordinate a divalent metal cation. The NAD(+) site is built by glycine 344 and alanine 347. (S)-malate contacts are provided by asparagine 458 and asparagine 502.

It belongs to the malic enzymes family. It depends on Mg(2+) as a cofactor. Mn(2+) serves as cofactor.

The protein resides in the mitochondrion matrix. The protein localises to the cytoplasm. It is found in the cytosol. Its subcellular location is the nucleus. The catalysed reaction is (S)-malate + NAD(+) = pyruvate + CO2 + NADH. The enzyme catalyses oxaloacetate + H(+) = pyruvate + CO2. Functionally, NAD-dependent mitochondrial malic enzyme that catalyzes the oxidative decarboxylation of malate to pyruvate. This is NAD-dependent malic enzyme, mitochondrial from Cryptococcus neoformans var. grubii serotype A (strain H99 / ATCC 208821 / CBS 10515 / FGSC 9487) (Filobasidiella neoformans var. grubii).